Reading from the N-terminus, the 340-residue chain is GTPase Obg (340 aa).

The Obg domain maps to methionine 1–isoleucine 161. In terms of domain architecture, OBG-type G spans alanine 162–methionine 335. GTP-binding positions include glycine 168–serine 175, phenylalanine 193–valine 197, aspartate 215–glycine 218, asparagine 285–aspartate 288, and serine 316–isoleucine 318. Mg(2+) contacts are provided by serine 175 and threonine 195.

The protein belongs to the TRAFAC class OBG-HflX-like GTPase superfamily. OBG GTPase family. In terms of assembly, monomer. It depends on Mg(2+) as a cofactor.

The protein resides in the cytoplasm. An essential GTPase which binds GTP, GDP and possibly (p)ppGpp with moderate affinity, with high nucleotide exchange rates and a fairly low GTP hydrolysis rate. Plays a role in control of the cell cycle, stress response, ribosome biogenesis and in those bacteria that undergo differentiation, in morphogenesis control. The chain is GTPase Obg from Blochmanniella pennsylvanica (strain BPEN).